The sequence spans 151 residues: Small ribosomal subunit protein uS15 (151 aa).

The tract at residues 1 to 20 (MGRMHSNGKGISGSSLPYNR) is disordered.

This sequence belongs to the universal ribosomal protein uS15 family. As to quaternary structure, component of the small ribosomal subunit. Part of the small subunit (SSU) processome, composed of more than 70 proteins and the RNA chaperone small nucleolar RNA (snoRNA) U3.

The protein localises to the cytoplasm. Its subcellular location is the nucleus. It is found in the nucleolus. Component of the small ribosomal subunit. The ribosome is a large ribonucleoprotein complex responsible for the synthesis of proteins in the cell. Part of the small subunit (SSU) processome, first precursor of the small eukaryotic ribosomal subunit. During the assembly of the SSU processome in the nucleolus, many ribosome biogenesis factors, an RNA chaperone and ribosomal proteins associate with the nascent pre-rRNA and work in concert to generate RNA folding, modifications, rearrangements and cleavage as well as targeted degradation of pre-ribosomal RNA by the RNA exosome. In Dictyostelium discoideum (Social amoeba), this protein is Small ribosomal subunit protein uS15 (rps13).